Consider the following 414-residue polypeptide: Transforming growth factor beta-2 proprotein (414 aa).

The signal sequence occupies residues 1–20 (MHYCVLSAFLLLHLVTVALS). 3 N-linked (GlcNAc...) asparagine glycosylation sites follow: asparagine 72, asparagine 140, and asparagine 241. 4 cysteine pairs are disulfide-bonded: cysteine 309-cysteine 318, cysteine 317-cysteine 380, cysteine 346-cysteine 411, and cysteine 350-cysteine 413.

Belongs to the TGF-beta family. As to quaternary structure, interacts with the serine proteases, HTRA1 and HTRA3. Interacts with ASPN. Interacts with MFAP5. In terms of assembly, interacts with Transforming growth factor beta-2 (TGF-beta-2) chain; interaction is non-covalent and maintains (TGF-beta-2) in a latent state. Interacts with LRRC32/GARP; leading to regulate activation of TGF-beta-2. Interacts with NREP; the interaction results in a decrease in TGFB2 autoinduction. Transforming growth factor beta-2: Homodimer; disulfide-linked. Transforming growth factor beta-2: Interacts with TGF-beta receptors (TGFBR1 and TGFBR2), leading to signal transduction. The precursor proprotein is cleaved in the Golgi apparatus to form Transforming growth factor beta-2 (TGF-beta-2) and Latency-associated peptide (LAP) chains, which remain non-covalently linked, rendering TGF-beta-2 inactive.

The protein resides in the secreted. It is found in the extracellular space. The protein localises to the extracellular matrix. Precursor of the Latency-associated peptide (LAP) and Transforming growth factor beta-2 (TGF-beta-2) chains, which constitute the regulatory and active subunit of TGF-beta-2, respectively. In terms of biological role, required to maintain the Transforming growth factor beta-2 (TGF-beta-2) chain in a latent state during storage in extracellular matrix. Associates non-covalently with TGF-beta-2 and regulates its activation via interaction with 'milieu molecules', such as LTBP1 and LRRC32/GARP, that control activation of TGF-beta-2. Functionally, multifunctional protein that regulates various processes such as angiogenesis and heart development. Activation into mature form follows different steps: following cleavage of the proprotein in the Golgi apparatus, Latency-associated peptide (LAP) and Transforming growth factor beta-2 (TGF-beta-2) chains remain non-covalently linked rendering TGF-beta-2 inactive during storage in extracellular matrix. At the same time, LAP chain interacts with 'milieu molecules', such as LTBP1 and LRRC32/GARP, that control activation of TGF-beta-2 and maintain it in a latent state during storage in extracellular milieus. Once activated following release of LAP, TGF-beta-2 acts by binding to TGF-beta receptors (TGFBR1 and TGFBR2), which transduce signal. In Bos taurus (Bovine), this protein is Transforming growth factor beta-2 proprotein (TGFB2).